The chain runs to 316 residues: UPF0613 protein PB24D3.06c (316 aa).

The protein belongs to the UPF0613 family.

Its subcellular location is the cytoplasm. The protein resides in the nucleus. The chain is UPF0613 protein PB24D3.06c from Schizosaccharomyces pombe (strain 972 / ATCC 24843) (Fission yeast).